Consider the following 107-residue polypeptide: Ig kappa chain V-VI region NQ6-8.3.1 (107 aa).

The segment at 1 to 23 is framework-1; that stretch reads QIVLTQSPAIMSASPGQKVTMTC. Cys-23 and Cys-87 are oxidised to a cystine. A complementarity-determining-1 region spans residues 24-33; that stretch reads SASSSVSYMH. The segment at 34–48 is framework-2; that stretch reads WYQQKSGTSPKRWIY. The tract at residues 49–55 is complementarity-determining-2; it reads DTSKLAS. Residues 56-87 form a framework-3 region; it reads GXPARFSGSGSATSYSLTITSMQAEDAATYYC. Residues 88–96 are complementarity-determining-3; sequence QQWSSNPLT. Positions 97–106 are framework-4; sequence FGAGTKLELK.

Anti-2-phenyl oxazolone (PHOX) Antibody. The polypeptide is Ig kappa chain V-VI region NQ6-8.3.1 (Mus musculus (Mouse)).